A 338-amino-acid polypeptide reads, in one-letter code: 3-dehydroquinate synthase (338 aa).

Belongs to the archaeal-type DHQ synthase family.

It catalyses the reaction 2-amino-2,3,7-trideoxy-D-lyxo-hept-6-ulosonate + NAD(+) + H2O = 3-dehydroquinate + NH4(+) + NADH + H(+). Its function is as follows. Catalyzes the oxidative deamination and cyclization of 2-amino-3,7-dideoxy-D-threo-hept-6-ulosonic acid (ADH) to yield 3-dehydroquinate (DHQ), which is fed into the canonical shikimic pathway of aromatic amino acid biosynthesis. This is 3-dehydroquinate synthase from Cenarchaeum symbiosum (strain A).